We begin with the raw amino-acid sequence, 308 residues long: Acetylglutamate kinase (308 aa).

Substrate is bound by residues 73–74, arginine 95, and asparagine 194; that span reads GG.

It belongs to the acetylglutamate kinase family. ArgB subfamily.

The protein resides in the cytoplasm. The enzyme catalyses N-acetyl-L-glutamate + ATP = N-acetyl-L-glutamyl 5-phosphate + ADP. Its pathway is amino-acid biosynthesis; L-arginine biosynthesis; N(2)-acetyl-L-ornithine from L-glutamate: step 2/4. Its function is as follows. Catalyzes the ATP-dependent phosphorylation of N-acetyl-L-glutamate. The protein is Acetylglutamate kinase of Rhodococcus jostii (strain RHA1).